Reading from the N-terminus, the 312-residue chain is Taste receptor type 2 member 9 (312 aa).

The Extracellular portion of the chain corresponds to 1-9; it reads MPSAIEAIY. Residues 10–32 form a helical membrane-spanning segment; the sequence is IILIAGELTIGIWGNGFIVLVNC. At 33–52 the chain is on the cytoplasmic side; the sequence is IDWLKRRDVSLIDIILISLA. A helical membrane pass occupies residues 53-72; the sequence is ISRICLLXVISLDGFFMLLF. Topologically, residues 73-86 are extracellular; sequence PTTYGNSVLVSIVB. Residues 87-109 traverse the membrane as a helical segment; it reads IVWTFANNSSLWFTSCLSIFYLL. Residues 110–128 are Cytoplasmic-facing; it reads KIANISHPFFFWLKLKINK. A helical membrane pass occupies residues 129–146; it reads VILAILLGSFLISLVISV. Residues 147-180 lie on the Extracellular side of the membrane; the sequence is XMNDDMWYHLFKVSHEENITWEFKVSKIPGTFKQ. N164 carries N-linked (GlcNAc...) asparagine glycosylation. A helical transmembrane segment spans residues 181–203; that stretch reads LTLNLGAMVPFILCLISFSLLLF. The Cytoplasmic segment spans residues 204 to 234; that stretch reads SLVRHTKQIQLXATGFRDPSTEAHMRAIKAV. A helical membrane pass occupies residues 235-257; that stretch reads IIFLLLLIVYYPVFLVMTSSALI. Topologically, residues 258–261 are extracellular; that stretch reads PQGK. A helical transmembrane segment spans residues 262–284; the sequence is LVLMIGDIVTITFPSSHSFILIM. At 285–312 the chain is on the cytoplasmic side; that stretch reads GNSKLREAFLKMLRFVKRFLRRRKPFVP.

Belongs to the G-protein coupled receptor T2R family.

The protein localises to the membrane. Functionally, gustducin-coupled receptor implicated in the perception of bitter compounds in the oral cavity and the gastrointestinal tract. Signals through PLCB2 and the calcium-regulated cation channel TRPM5. This chain is Taste receptor type 2 member 9 (TAS2R9), found in Pongo pygmaeus (Bornean orangutan).